We begin with the raw amino-acid sequence, 197 residues long: Histidine biosynthesis bifunctional protein HisIE (197 aa).

The phosphoribosyl-AMP cyclohydrolase stretch occupies residues 1-108 (MMTLYPVVVQ…RFEETGSPTF (108 aa)). A phosphoribosyl-ATP pyrophosphohydrolase region spans residues 109 to 197 (WLELYRLVRK…VMRELEKRRK (89 aa)).

In the N-terminal section; belongs to the PRA-CH family. It in the C-terminal section; belongs to the PRA-PH family.

It localises to the cytoplasm. The catalysed reaction is 1-(5-phospho-beta-D-ribosyl)-ATP + H2O = 1-(5-phospho-beta-D-ribosyl)-5'-AMP + diphosphate + H(+). It catalyses the reaction 1-(5-phospho-beta-D-ribosyl)-5'-AMP + H2O = 1-(5-phospho-beta-D-ribosyl)-5-[(5-phospho-beta-D-ribosylamino)methylideneamino]imidazole-4-carboxamide. It functions in the pathway amino-acid biosynthesis; L-histidine biosynthesis; L-histidine from 5-phospho-alpha-D-ribose 1-diphosphate: step 2/9. Its pathway is amino-acid biosynthesis; L-histidine biosynthesis; L-histidine from 5-phospho-alpha-D-ribose 1-diphosphate: step 3/9. In Thermotoga maritima (strain ATCC 43589 / DSM 3109 / JCM 10099 / NBRC 100826 / MSB8), this protein is Histidine biosynthesis bifunctional protein HisIE (hisI).